Here is a 307-residue protein sequence, read N- to C-terminus: Exosome complex component RRP45A (307 aa).

The protein belongs to the RNase PH family. Expressed in roots, leaves, stems, buds and siliques.

It localises to the cytoplasm. It is found in the nucleus. Functionally, probable 3'-&gt;5' exoribonuclease involved in the regulation of cuticular wax biosynthesis. Can perform exosomal functions and partially complement the yeast rrp45 null mutant. The polypeptide is Exosome complex component RRP45A (Arabidopsis thaliana (Mouse-ear cress)).